Consider the following 391-residue polypeptide: Phosphoglycerate kinase (391 aa).

Substrate is bound by residues 21-23 (DLN), Arg-36, 59-62 (HLGR), Arg-113, and Arg-146. ATP contacts are provided by residues Lys-197, Glu-319, and 345–348 (GGDT).

It belongs to the phosphoglycerate kinase family. In terms of assembly, monomer.

It localises to the cytoplasm. It carries out the reaction (2R)-3-phosphoglycerate + ATP = (2R)-3-phospho-glyceroyl phosphate + ADP. Its pathway is carbohydrate degradation; glycolysis; pyruvate from D-glyceraldehyde 3-phosphate: step 2/5. The polypeptide is Phosphoglycerate kinase (Shewanella sp. (strain MR-4)).